Consider the following 239-residue polypeptide: Insulin-like growth factor-binding protein 3 receptor (239 aa).

The signal sequence occupies residues 1-38; the sequence is MGSCQAGHYLHFCLAHHPPLVCATLILLLLGLSGLGLG. The Extracellular segment spans residues 39–205; it reads GFLLTHRTDL…EELTLCGSRL (167 aa). N-linked (GlcNAc...) asparagine glycosylation is found at Asn-101 and Asn-167. Residues 206–226 form a helical membrane-spanning segment; it reads LVLGFFLILFCGLCCLTAACF. Residues 227-239 are Cytoplasmic-facing; it reads HPRRESHWSRTRL.

Interacts with IGFBP3. Interacts with CASP8.

Its subcellular location is the cell membrane. Cell death receptor specific for IGFBP3, may mediate caspase-8-dependent apoptosis upon ligand binding. The sequence is that of Insulin-like growth factor-binding protein 3 receptor (TMEM219) from Bos taurus (Bovine).